The primary structure comprises 866 residues: N-alpha-acetyltransferase 15, NatA auxiliary subunit (866 aa).

4 TPR repeats span residues 46–79, 80–113, 148–184, and 224–257; these read GETL…DLKS, HVCW…DKDN, RASW…SPDK, and LAVE…NPEN. The residue at position 262 (lysine 262) is an N6-acetyllysine. A Phosphoserine modification is found at serine 302. 3 TPR repeats span residues 374-407, 409-441, and 485-522; these read LWVQ…TPTL, ELFL…DTAD, and MWFQ…TDDQ. An interaction with HYPK region spans residues 500-866; it reads KFGEALKKCY…AEAEELANEI (367 aa). Phosphoserine occurs at positions 537 and 588. A compositionally biased stretch (basic and acidic residues) spans 579-594; it reads EHEADTANMSDKELKK. Residues 579–642 form a disordered region; sequence EHEADTANMS…EEIGGPKEEL (64 aa). A compositionally biased stretch (basic residues) spans 595–604; it reads LRNKQRRAQK. Positions 606 to 621 are enriched in basic and acidic residues; the sequence is AQIEEEKKNAEKEKQQ. One copy of the TPR 8 repeat lies at 672–705; sequence IETHLFAFEIYFRKEKFLLMLQSVKRAFAIDSSH. Lysine 735 and lysine 756 each carry N6-acetyllysine. 2 positions are modified to phosphoserine: serine 855 and serine 856.

In terms of assembly, component of the N-terminal acetyltransferase A (NatA) complex composed of NAA10 or probably NAA11 and NAA15. Interacts with XRCC6, NAA50 and XRCC5. Associates with HYPK when in a complex with NAA10. Interaction with HYPK reduces the capacity to interact with NAA50. Cleaved by caspases during apoptosis.

It is found in the cytoplasm. Its subcellular location is the nucleus. In terms of biological role, auxillary subunit of the N-terminal acetyltransferase A (NatA) complex which displays alpha (N-terminal) acetyltransferase activity. The NAT activity may be important for vascular, hematopoietic and neuronal growth and development. Required to control retinal neovascularization in adult ocular endothelial cells. In complex with XRCC6 and XRCC5 (Ku80), up-regulates transcription from the osteocalcin promoter. In Pongo abelii (Sumatran orangutan), this protein is N-alpha-acetyltransferase 15, NatA auxiliary subunit (NAA15).